The chain runs to 334 residues: GTP 3',8-cyclase (334 aa).

The 226-residue stretch at 11 to 236 (GFNRKIDYLR…ESTESSMGPA (226 aa)) folds into the Radical SAM core domain. Arg20 serves as a coordination point for GTP. 2 residues coordinate [4Fe-4S] cluster: Cys27 and Cys31. Position 33 (Tyr33) interacts with S-adenosyl-L-methionine. Cys34 is a binding site for [4Fe-4S] cluster. Arg69 provides a ligand contact to GTP. Gly73 provides a ligand contact to S-adenosyl-L-methionine. Residue Thr100 participates in GTP binding. Position 124 (Ser124) interacts with S-adenosyl-L-methionine. Lys161 is a GTP binding site. An S-adenosyl-L-methionine-binding site is contributed by Met195. Residues Cys260 and Cys263 each coordinate [4Fe-4S] cluster. 265–267 (RVR) contributes to the GTP binding site. A [4Fe-4S] cluster-binding site is contributed by Cys277.

Belongs to the radical SAM superfamily. MoaA family. As to quaternary structure, monomer and homodimer. [4Fe-4S] cluster is required as a cofactor.

The enzyme catalyses GTP + AH2 + S-adenosyl-L-methionine = (8S)-3',8-cyclo-7,8-dihydroguanosine 5'-triphosphate + 5'-deoxyadenosine + L-methionine + A + H(+). The protein operates within cofactor biosynthesis; molybdopterin biosynthesis. Functionally, catalyzes the cyclization of GTP to (8S)-3',8-cyclo-7,8-dihydroguanosine 5'-triphosphate. The chain is GTP 3',8-cyclase from Pseudomonas putida (strain ATCC 47054 / DSM 6125 / CFBP 8728 / NCIMB 11950 / KT2440).